We begin with the raw amino-acid sequence, 61 residues long: Probable tautomerase SMU_1087 (61 aa).

The active-site Proton acceptor; via imino nitrogen is Pro-2.

The protein belongs to the 4-oxalocrotonate tautomerase family.

The chain is Probable tautomerase SMU_1087 from Streptococcus mutans serotype c (strain ATCC 700610 / UA159).